Here is a 314-residue protein sequence, read N- to C-terminus: Thymidylate synthase (314 aa).

Residues Arg21 and 176-177 contribute to the dUMP site; that span reads RR. Cys196 acts as the Nucleophile in catalysis. DUMP is bound by residues 216–219, Asn227, and 257–259; these read RSAD and HLY. Residue Asp219 coordinates (6R)-5,10-methylene-5,6,7,8-tetrahydrofolate. (6R)-5,10-methylene-5,6,7,8-tetrahydrofolate is bound at residue Ser313.

The protein belongs to the thymidylate synthase family. Bacterial-type ThyA subfamily. As to quaternary structure, homodimer.

The protein resides in the cytoplasm. The catalysed reaction is dUMP + (6R)-5,10-methylene-5,6,7,8-tetrahydrofolate = 7,8-dihydrofolate + dTMP. It functions in the pathway pyrimidine metabolism; dTTP biosynthesis. Functionally, catalyzes the reductive methylation of 2'-deoxyuridine-5'-monophosphate (dUMP) to 2'-deoxythymidine-5'-monophosphate (dTMP) while utilizing 5,10-methylenetetrahydrofolate (mTHF) as the methyl donor and reductant in the reaction, yielding dihydrofolate (DHF) as a by-product. This enzymatic reaction provides an intracellular de novo source of dTMP, an essential precursor for DNA biosynthesis. This is Thymidylate synthase from Listeria monocytogenes serovar 1/2a (strain ATCC BAA-679 / EGD-e).